The primary structure comprises 443 residues: Xaa-Pro dipeptidase (443 aa).

Positions 246, 257, 339, 384, and 423 each coordinate Mn(2+).

It belongs to the peptidase M24B family. Bacterial-type prolidase subfamily. The cofactor is Mn(2+).

It catalyses the reaction Xaa-L-Pro dipeptide + H2O = an L-alpha-amino acid + L-proline. Functionally, splits dipeptides with a prolyl residue in the C-terminal position. The chain is Xaa-Pro dipeptidase from Citrobacter koseri (strain ATCC BAA-895 / CDC 4225-83 / SGSC4696).